The following is a 508-amino-acid chain: Aspartic proteinase yapsin-3 (508 aa).

An N-terminal signal peptide occupies residues 1-20; that stretch reads MKLQLAAVATLAVLTSPAFG. Positions 21–47 are excised as a propeptide; the sequence is RVLPDGKYVKIPFTKKKNGDNGELSKR. The 332-residue stretch at 63 to 394 folds into the Peptidase A1 domain; it reads YSVELAIGTP…DLDNYEISLA (332 aa). Residue Asn-75 is glycosylated (N-linked (GlcNAc...) asparagine). The active site involves Asp-81. Residues Asn-120, Asn-160, Asn-163, and Asn-275 are each glycosylated (N-linked (GlcNAc...) asparagine). Asp-288 is a catalytic residue. N-linked (GlcNAc...) asparagine glycosylation is found at Asn-309, Asn-328, Asn-367, Asn-422, Asn-445, and Asn-462. The segment covering 448–468 has biased composition (low complexity); the sequence is STATTTRSTTTKKTNSTTTAK. Positions 448 to 476 are disordered; that stretch reads STATTTRSTTTKKTNSTTTAKSTHKSKRA. Asn-483 carries GPI-anchor amidated asparagine lipidation. The propeptide at 484–508 is removed in mature form; sequence SASSIRSTLGLLLVPSLLILSVFFS.

It belongs to the peptidase A1 family. Post-translationally, can also be processed to start at Phe-54.

It is found in the cell membrane. Its function is as follows. Cleaves proteins C-terminally to mono- and paired-basic residues. Required for cell wall integrity. The polypeptide is Aspartic proteinase yapsin-3 (YPS3) (Saccharomyces cerevisiae (strain ATCC 204508 / S288c) (Baker's yeast)).